The chain runs to 279 residues: Tryptophan 2,3-dioxygenase (279 aa).

Substrate-binding positions include 48–52, Tyr-110, and Arg-114; that span reads FIVIH. A heme-binding site is contributed by His-237. Position 251 (Thr-251) interacts with substrate.

This sequence belongs to the tryptophan 2,3-dioxygenase family. In terms of assembly, homotetramer. Requires heme as cofactor.

It catalyses the reaction L-tryptophan + O2 = N-formyl-L-kynurenine. It participates in amino-acid degradation; L-tryptophan degradation via kynurenine pathway; L-kynurenine from L-tryptophan: step 1/2. Its function is as follows. Heme-dependent dioxygenase that catalyzes the oxidative cleavage of the L-tryptophan (L-Trp) pyrrole ring and converts L-tryptophan to N-formyl-L-kynurenine. Catalyzes the oxidative cleavage of the indole moiety. This chain is Tryptophan 2,3-dioxygenase, found in Bacillus anthracis.